A 174-amino-acid polypeptide reads, in one-letter code: Regenerating islet-derived protein 3-gamma (174 aa).

A signal peptide spans 1–26 (MLPRVALTTMSWMLLSSLMLLSQVQG). Positions 27–37 (EDAKEDVPTSR) are excised as a propeptide. Disulfide bonds link C40–C51, C68–C170, and C145–C162. The 125-residue stretch at 47–171 (YGSYCYALFS…CISELPYVCK (125 aa)) folds into the C-type lectin domain. The sufficient to activate EXTL3 stretch occupies residues 103-118 (WIGLHDPTLGQEPNRG). H107 is a binding site for Zn(2+). The EPN motif lies at 114-116 (EPN). Positions 121 and 144 each coordinate Zn(2+).

In terms of assembly, forms a hexameric membrane-permeabilizing oligomeric pore on membrane phospholipids. The hexamer is formed by three dimers related by helical symmetry. Forms filaments, filamentation traps pore complexes and limits damage to host cells. Interacts with EXTL3. Post-translationally, proteolytic processing by trypsin removes an inhibitory N-terminal propeptide and is essential for peptidoglycan binding and antibacterial activity. In terms of tissue distribution, expressed in injured skeletal muscles and sciatic nerve (at protein level). Expressed in the pancreas. Expression increases during the acute phase of pancreatitis.

The protein localises to the secreted. It is found in the cytoplasm. With respect to regulation, lipopolysaccharide inhibits pore-forming activity, explaining why is bactericidal for Gram-positive but not Gram-negative bacteria. In terms of biological role, bactericidal C-type lectin which acts exclusively against Gram-positive bacteria and mediates bacterial killing by binding to surface-exposed carbohydrate moieties of peptidoglycan. Restricts bacterial colonization of the intestinal epithelial surface and consequently limits activation of adaptive immune responses by the microbiota. Acts as a hormone in response to different stimuli like anti-inflammatory signals, such as IL17A, or gut microbiome. Is secreted by different cell types to activate its receptor EXTL3 and induce cell specific signaling pathways. Induced by IL17A in keratinocytes, regulates keratinocyte proliferation and differentiation after skin injury. In parallel, inhibits skin inflammation through the inhibition of inflammatory cytokines such as IL6 and TNF. Induced by IL22 in lung epithelial cells, inhibits cytokine production and regulates allergic airway inflammation. Induced in small intestine by inulin-enriched diet and Lactobacillus gasseri enriched microbiome, plays a role in the improvement of gut barrier function, the regulation of energy balance and glucose levels. Modulates microbiota composition in duodenal contents. Produced by nociceptor in response to endotoxins, prevents endotoxic death by targeting kynurenine pathway in microglia. Its function is as follows. Has bacteriostatic activity. Functionally, has bactericidal activity against L.monocytogenes and methicillin-resistant S.aureus. This Rattus norvegicus (Rat) protein is Regenerating islet-derived protein 3-gamma.